Here is a 132-residue protein sequence, read N- to C-terminus: UPF0102 protein Acel_1550 (132 aa).

The protein belongs to the UPF0102 family.

The chain is UPF0102 protein Acel_1550 from Acidothermus cellulolyticus (strain ATCC 43068 / DSM 8971 / 11B).